An 872-amino-acid polypeptide reads, in one-letter code: N-acetyltransferase eso1 (872 aa).

A polymerase type-Y region spans residues 1 to 591 (MELGKSKFSW…KQVKPKTYGR (591 aa)). A UmuC domain is found at 29–285 (VAHIDQDAFY…LKITDIRMLG (257 aa)). The segment at 533 to 567 (SADETYTCEECEQKITLSERNEHEDYHIALSISRK) adopts a UBZ3-type zinc-finger fold. Zn(2+)-binding residues include Cys540, Cys543, His555, and His559. The interval 569-602 (RYNNLVPPSHDKPKQVKPKTYGRKTGSKHYAPLS) is disordered. Over residues 583 to 595 (QVKPKTYGRKTGS) the composition is skewed to basic residues. An acetyltransferase region spans residues 592-872 (KTGSKHYAPL…KSLRYAVYES (281 aa)). The segment at 653-677 (VTCSECSMEYNSTSEEDILLHSRFH) adopts a CCHH-type zinc-finger fold.

The protein in the C-terminal section; belongs to the acetyltransferase family. ECO subfamily. In the N-terminal section; belongs to the DNA polymerase type-Y family. As to quaternary structure, interacts with pds5.

It is found in the nucleus. In terms of biological role, probable acetyltransferase required for the establishment of sister chromatid cohesion and couple the processes of cohesion and DNA replication to ensure that only sister chromatids become paired together. In contrast to the structural cohesins, the deposition and establishment factors are required only during S phase. The relevance of acetyltransferase function remains unclear. The chain is N-acetyltransferase eso1 (eso1) from Schizosaccharomyces pombe (strain 972 / ATCC 24843) (Fission yeast).